Here is a 1477-residue protein sequence, read N- to C-terminus: Putative insulin-like peptide receptor (1477 aa).

The signal sequence occupies residues M1 to S24. Topologically, residues A25 to L980 are extracellular. 13 N-linked (GlcNAc...) asparagine glycosylation sites follow: N55, N255, N300, N325, N457, N491, N549, N644, N732, N791, N874, N895, and N957. 2 Fibronectin type-III domains span residues E652–D750 and N780–A869. One can recognise a Fibronectin type-III 3 domain in the interval L880–L971. Residues I981 to L1001 form a helical membrane-spanning segment. Over Y1002–V1477 the chain is Cytoplasmic. The 272-residue stretch at I1044–V1315 folds into the Protein kinase domain. Residues L1050–V1058 and K1077 contribute to the ATP site. D1175 serves as the catalytic Proton acceptor. A Phosphotyrosine; by autocatalysis modification is found at Y1201. 2 disordered regions span residues Y1350 to E1376 and K1391 to C1421. Over residues N1356 to K1368 the composition is skewed to polar residues. Positions K1403–R1412 are enriched in basic residues.

This sequence belongs to the protein kinase superfamily. Tyr protein kinase family. Insulin receptor subfamily. The cofactor is Mn(2+). As to expression, expressed in dividing epithelial cells.

The protein resides in the membrane. The catalysed reaction is L-tyrosyl-[protein] + ATP = O-phospho-L-tyrosyl-[protein] + ADP + H(+). This receptor probably binds an insulin related protein and has a tyrosine-protein kinase activity. In Hydra vulgaris (Hydra), this protein is Putative insulin-like peptide receptor (HTK7).